Here is a 321-residue protein sequence, read N- to C-terminus: Glucokinase (321 aa).

9 to 14 provides a ligand contact to ATP; the sequence is ADIGGT.

The protein belongs to the bacterial glucokinase family.

The protein resides in the cytoplasm. The catalysed reaction is D-glucose + ATP = D-glucose 6-phosphate + ADP + H(+). This Saccharophagus degradans (strain 2-40 / ATCC 43961 / DSM 17024) protein is Glucokinase.